The primary structure comprises 172 residues: NADH-ubiquinone oxidoreductase chain 6 (172 aa).

Helical transmembrane passes span 1–21 (MTYFVLFLGLCFVLGGLAVAS), 27–47 (YGVVGLVLASVAGCAWLLSLG), 48–68 (VSFVSLVLFMVYLGGMLVVFV), 87–107 (VVGYGMGFVAVLVMGMVVGGF), and 138–158 (CGVGMFLVAGWGLLLTLFVVL).

Belongs to the complex I subunit 6 family.

The protein localises to the mitochondrion membrane. It catalyses the reaction a ubiquinone + NADH + 5 H(+)(in) = a ubiquinol + NAD(+) + 4 H(+)(out). Core subunit of the mitochondrial membrane respiratory chain NADH dehydrogenase (Complex I) that is believed to belong to the minimal assembly required for catalysis. Complex I functions in the transfer of electrons from NADH to the respiratory chain. The immediate electron acceptor for the enzyme is believed to be ubiquinone. This Uria lomvia (Thick-billed murre) protein is NADH-ubiquinone oxidoreductase chain 6 (MT-ND6).